The chain runs to 355 residues: UDP-3-O-acylglucosamine N-acyltransferase (355 aa).

The Proton acceptor role is filled by histidine 248.

It belongs to the transferase hexapeptide repeat family. LpxD subfamily. Homotrimer.

It catalyses the reaction a UDP-3-O-[(3R)-3-hydroxyacyl]-alpha-D-glucosamine + a (3R)-hydroxyacyl-[ACP] = a UDP-2-N,3-O-bis[(3R)-3-hydroxyacyl]-alpha-D-glucosamine + holo-[ACP] + H(+). It participates in bacterial outer membrane biogenesis; LPS lipid A biosynthesis. Functionally, catalyzes the N-acylation of UDP-3-O-acylglucosamine using 3-hydroxyacyl-ACP as the acyl donor. Is involved in the biosynthesis of lipid A, a phosphorylated glycolipid that anchors the lipopolysaccharide to the outer membrane of the cell. The sequence is that of UDP-3-O-acylglucosamine N-acyltransferase from Syntrophobacter fumaroxidans (strain DSM 10017 / MPOB).